A 128-amino-acid chain; its full sequence is Probable 4-amino-4-deoxy-L-arabinose-phosphoundecaprenol flippase subunit ArnF (128 aa).

The Cytoplasmic segment spans residues 1-2; the sequence is MG. Residues 3–23 form a helical membrane-spanning segment; that stretch reads LMWGLFSVIIASVAQLSLGFA. Over 24–35 the chain is Periplasmic; sequence ASHLPPMTHLWD. Residues 36–56 form a helical membrane-spanning segment; sequence FIAALLAFGLDARILLLGLLG. At 57–76 the chain is on the cytoplasmic side; it reads YLLSVFCWYKTLHKLALSKA. Residues 77-97 form a helical membrane-spanning segment; it reads YALLSMSYVLVWIASMVLPGW. Residues 98–100 lie on the Periplasmic side of the membrane; it reads EGT. Residues 101-121 traverse the membrane as a helical segment; that stretch reads FSLKALLGVACIMSGLMLIFL. Over 122–128 the chain is Cytoplasmic; sequence PTTKQRY.

Belongs to the ArnF family. In terms of assembly, heterodimer of ArnE and ArnF.

It is found in the cell inner membrane. It participates in bacterial outer membrane biogenesis; lipopolysaccharide biosynthesis. Its function is as follows. Translocates 4-amino-4-deoxy-L-arabinose-phosphoundecaprenol (alpha-L-Ara4N-phosphoundecaprenol) from the cytoplasmic to the periplasmic side of the inner membrane. The chain is Probable 4-amino-4-deoxy-L-arabinose-phosphoundecaprenol flippase subunit ArnF from Shigella sonnei (strain Ss046).